The chain runs to 559 residues: 3-phosphoinositide-dependent protein kinase 1 (559 aa).

Tyr9 bears the Phosphotyrosine; by SRC and INSR mark. Residue Ser25 is modified to Phosphoserine. The tract at residues 25–83 (SPSMVRSQTEPSSSPGIPSGVSRQGSTMDGTTAEARPSTNPLQQHPAQLPPQPRKKRPE) is disordered. Residues 35–46 (PSSSPGIPSGVS) are compositionally biased toward low complexity. The Protein kinase domain maps to 85–345 (FKFGKILGEG…YGPLKAHPFF (261 aa)). ATP is bound by residues 95–97 (SFS) and Lys114. The tract at residues 116-160 (LEKRHIIKENKVPYVTRERDVMSRLDHPFFVKLYFTFQDDEKLYF) is PIF-pocket. ATP is bound by residues 163–165 (SYA) and Glu169. Catalysis depends on Asp208, which acts as the Proton acceptor. Residues Glu212 and Asp226 each coordinate ATP. The residue at position 244 (Ser244) is a Phosphoserine. An N6-acetyllysine modification is found at Lys307. Residue Thr357 is modified to Phosphothreonine; by MELK. Residues Tyr376 and Tyr379 each carry the phosphotyrosine; by SRC and INSR modification. Ser396 is modified (phosphoserine). Position 397 is a phosphoserine; by MAP3K5 (Ser397). Phosphoserine is present on Ser399. A Phosphoserine; by MAP3K5 modification is found at Ser401. Ser413 carries the phosphoserine modification. The region spanning 462 to 553 (KMGPVDKRKG…EVWRQQYQSS (92 aa)) is the PH domain. Phosphoserine; by PKC/PRKCQ is present on Ser504. Phosphothreonine; by autocatalysis is present on Thr516. Ser532 is subject to Phosphoserine; by PKC/PRKCQ.

The protein belongs to the protein kinase superfamily. AGC Ser/Thr protein kinase family. PDPK1 subfamily. As to quaternary structure, homodimer in its autoinhibited state. Active as monomer. Interacts with NPRL2, PPARG, PAK1, PTK2B, GRB14, PKN1 (via C-terminus), STRAP and IKKB. The Tyr-9 phosphorylated form interacts with SRC, RASA1 and CRK (via their SH2 domains). Interacts with SGK3 in a phosphorylation-dependent manner. The tyrosine-phosphorylated form interacts with PTPN6. The Ser-244 phosphorylated form interacts with YWHAH and YWHAQ. Binds INSR in response to insulin. Interacts (via PH domain) with SMAD3, SMAD4 and SMAD7. Interacts with PKN2; the interaction stimulates PDPK1 autophosphorylation, its PI(3,4,5)P3-dependent kinase activity toward 'Ser-473' of AKT1 but also activates its kinase activity toward PRKCD and PRKCZ. Post-translationally, phosphorylation on Ser-244 in the activation loop is required for full activity. PDPK1 itself can autophosphorylate Ser-244, leading to its own activation. Autophosphorylation is inhibited by the apoptotic C-terminus cleavage product of PKN2. Tyr-9 phosphorylation is critical for stabilization of both PDPK1 and the PDPK1/SRC complex via HSP90-mediated protection of PDPK1 degradation. Angiotensin II stimulates the tyrosine phosphorylation of PDPK1 in vascular smooth muscle in a calcium- and SRC-dependent manner. Phosphorylated on Tyr-9, Tyr-376 and Tyr-379 by INSR in response to insulin. Palmitate negatively regulates autophosphorylation at Ser-244 and palmitate-induced phosphorylation at Ser-532 and Ser-504 by PKC/PRKCQ negatively regulates its ability to phosphorylate PKB/AKT1. Phosphorylation at Thr-357 by MELK partially inhibits kinase activity, the inhibition is cooperatively enhanced by phosphorylation at Ser-397 and Ser-401 by MAP3K5. In terms of processing, monoubiquitinated in the kinase domain, deubiquitinated by USP4.

It is found in the cytoplasm. Its subcellular location is the nucleus. The protein resides in the cell membrane. The protein localises to the cell junction. It localises to the focal adhesion. It catalyses the reaction L-seryl-[protein] + ATP = O-phospho-L-seryl-[protein] + ADP + H(+). It carries out the reaction L-threonyl-[protein] + ATP = O-phospho-L-threonyl-[protein] + ADP + H(+). Its activity is regulated as follows. Homodimerization regulates its activity by maintaining the kinase in an autoinhibitory conformation. NPRL2 down-regulates its activity by interfering with tyrosine phosphorylation at the Tyr-9, Tyr-376 and Tyr-379 residues. The 14-3-3 protein YWHAQ acts as a negative regulator by association with the residues surrounding the Ser-244 residue. STRAP positively regulates its activity by enhancing its autophosphorylation and by stimulating its dissociation from YWHAQ. SMAD2, SMAD3, SMAD4 and SMAD7 also positively regulate its activity by stimulating its dissociation from YWHAQ. Activated by phosphorylation on Tyr-9, Tyr-376 and Tyr-379 by INSR in response to insulin. Functionally, serine/threonine kinase which acts as a master kinase, phosphorylating and activating a subgroup of the AGC family of protein kinases. Its targets include: protein kinase B (PKB/AKT1, PKB/AKT2, PKB/AKT3), p70 ribosomal protein S6 kinase (RPS6KB1), p90 ribosomal protein S6 kinase (RPS6KA1, RPS6KA2 and RPS6KA3), cyclic AMP-dependent protein kinase (PRKACA), protein kinase C (PRKCD and PRKCZ), serum and glucocorticoid-inducible kinase (SGK1, SGK2 and SGK3), p21-activated kinase-1 (PAK1), TSSK3, protein kinase PKN (PKN1 and PKN2). Plays a central role in the transduction of signals from insulin by providing the activating phosphorylation to PKB/AKT1, thus propagating the signal to downstream targets controlling cell proliferation and survival, as well as glucose and amino acid uptake and storage. Negatively regulates the TGF-beta-induced signaling by: modulating the association of SMAD3 and SMAD7 with TGF-beta receptor, phosphorylating SMAD2, SMAD3, SMAD4 and SMAD7, preventing the nuclear translocation of SMAD3 and SMAD4 and the translocation of SMAD7 from the nucleus to the cytoplasm in response to TGF-beta. Activates PPARG transcriptional activity and promotes adipocyte differentiation. Activates the NF-kappa-B pathway via phosphorylation of IKKB. The tyrosine phosphorylated form is crucial for the regulation of focal adhesions by angiotensin II. Controls proliferation, survival, and growth of developing pancreatic cells. Participates in the regulation of Ca(2+) entry and Ca(2+)-activated K(+) channels of mast cells. Essential for the motility of vascular endothelial cells (ECs) and is involved in the regulation of their chemotaxis. Plays a critical role in cardiac homeostasis by serving as a dual effector for cell survival and beta-adrenergic response. Plays an important role during thymocyte development by regulating the expression of key nutrient receptors on the surface of pre-T cells and mediating Notch-induced cell growth and proliferative responses. Provides negative feedback inhibition to toll-like receptor-mediated NF-kappa-B activation in macrophages. The protein is 3-phosphoinositide-dependent protein kinase 1 (Pdpk1) of Rattus norvegicus (Rat).